Reading from the N-terminus, the 1173-residue chain is Clustered mitochondria protein homolog (1173 aa).

A compositionally biased stretch (low complexity) spans 1–21; it reads MSTIDLPTSSLPGSSGDPSGT. Positions 1–25 are disordered; the sequence is MSTIDLPTSSLPGSSGDPSGTEMSH. Positions 316 to 565 constitute a Clu domain; that stretch reads VPHRADLSRT…SLFPLDAQFL (250 aa). Residues 888–910 are disordered; it reads KFTGKKGNKKKRNLGKSQNTTNR. Residues 890-901 are compositionally biased toward basic residues; that stretch reads TGKKGNKKKRNL. One copy of the TPR repeat lies at 984 to 1017; it reads ARAYCQLAMIYHQLEKKEEAVELARKAVIVCERF.

The protein belongs to the CLU family. May associate with the eukaryotic translation initiation factor 3 (eIF-3) complex.

The protein localises to the cytoplasm. Its function is as follows. mRNA-binding protein involved in proper cytoplasmic distribution of mitochondria. The polypeptide is Clustered mitochondria protein homolog (Schizosaccharomyces pombe (strain 972 / ATCC 24843) (Fission yeast)).